A 156-amino-acid polypeptide reads, in one-letter code: Crossover junction endodeoxyribonuclease RuvC (156 aa).

Active-site residues include Asp-7, Glu-67, and Asp-140. Residues Asp-7, Glu-67, and Asp-140 each coordinate Mg(2+).

It belongs to the RuvC family. As to quaternary structure, homodimer which binds Holliday junction (HJ) DNA. The HJ becomes 2-fold symmetrical on binding to RuvC with unstacked arms; it has a different conformation from HJ DNA in complex with RuvA. In the full resolvosome a probable DNA-RuvA(4)-RuvB(12)-RuvC(2) complex forms which resolves the HJ. Mg(2+) serves as cofactor.

The protein resides in the cytoplasm. The enzyme catalyses Endonucleolytic cleavage at a junction such as a reciprocal single-stranded crossover between two homologous DNA duplexes (Holliday junction).. In terms of biological role, the RuvA-RuvB-RuvC complex processes Holliday junction (HJ) DNA during genetic recombination and DNA repair. Endonuclease that resolves HJ intermediates. Cleaves cruciform DNA by making single-stranded nicks across the HJ at symmetrical positions within the homologous arms, yielding a 5'-phosphate and a 3'-hydroxyl group; requires a central core of homology in the junction. The consensus cleavage sequence is 5'-(A/T)TT(C/G)-3'. Cleavage occurs on the 3'-side of the TT dinucleotide at the point of strand exchange. HJ branch migration catalyzed by RuvA-RuvB allows RuvC to scan DNA until it finds its consensus sequence, where it cleaves and resolves the cruciform DNA. This Rickettsia felis (strain ATCC VR-1525 / URRWXCal2) (Rickettsia azadi) protein is Crossover junction endodeoxyribonuclease RuvC.